The following is a 149-amino-acid chain: Probable glycine-rich RNA-binding protein 1 (149 aa).

Residues 8-83 enclose the RRM domain; that stretch reads YRCFVGGLAW…LDGRNITAQA (76 aa). Residues 80-149 form a disordered region; the sequence is TAQARGSGTR…GRSEGGSWRN (70 aa). Composition is skewed to gly residues over residues 87 to 101, 110 to 123, and 131 to 143; these read GTRG…SGGY, YNRG…GGYG, and YGDG…GRSE.

It belongs to the GR-RBP family.

Possibly has a role in RNA transcription or processing during stress. In Arabidopsis thaliana (Mouse-ear cress), this protein is Probable glycine-rich RNA-binding protein 1 (RBG1).